The primary structure comprises 986 residues: Bifunctional glutamine synthetase adenylyltransferase/adenylyl-removing enzyme (986 aa).

Residues Met-1–Pro-473 form an adenylyl removase region. The interval Ser-478–Arg-986 is adenylyl transferase.

Belongs to the GlnE family. Mg(2+) serves as cofactor.

The enzyme catalyses [glutamine synthetase]-O(4)-(5'-adenylyl)-L-tyrosine + phosphate = [glutamine synthetase]-L-tyrosine + ADP. The catalysed reaction is [glutamine synthetase]-L-tyrosine + ATP = [glutamine synthetase]-O(4)-(5'-adenylyl)-L-tyrosine + diphosphate. Its function is as follows. Involved in the regulation of glutamine synthetase GlnA, a key enzyme in the process to assimilate ammonia. When cellular nitrogen levels are high, the C-terminal adenylyl transferase (AT) inactivates GlnA by covalent transfer of an adenylyl group from ATP to specific tyrosine residue of GlnA, thus reducing its activity. Conversely, when nitrogen levels are low, the N-terminal adenylyl removase (AR) activates GlnA by removing the adenylyl group by phosphorolysis, increasing its activity. The regulatory region of GlnE binds the signal transduction protein PII (GlnB) which indicates the nitrogen status of the cell. In Bradyrhizobium sp. (strain ORS 278), this protein is Bifunctional glutamine synthetase adenylyltransferase/adenylyl-removing enzyme.